A 1254-amino-acid chain; its full sequence is Structural polyprotein (1254 aa).

The necessary for nucleocapsid assembly and virus assembly stretch occupies residues 1-33 (MFPFQPMYPMQPMPYRNPFAAPRRPWFPRTDPF). A host transcription inhibition region spans residues 33 to 68 (FLAMQVQELTRSMANLTFKQRRDAPPEGPSAKKPKK). Residues 41 to 48 (LTRSMANL) carry the Supraphysiological nuclear export signal motif. A disordered region spans residues 45–119 (MANLTFKQRR…KKPGKRQRMV (75 aa)). Positions 64-68 (KKPKK) match the Nuclear localization signal motif. The segment covering 80-92 (GKKKKNQGKKKAK) has biased composition (basic residues). Residues 91–127 (AKTGPPNPKAQNGNKKKTNKKPGKRQRMVMKLESDKT) are binding to the viral RNA. Phosphothreonine occurs at positions 93 and 108. Positions 104–118 (NKKKTNKKPGKRQRM) are enriched in basic residues. The interval 112 to 126 (PGKRQRMVMKLESDK) is ribosome-binding. Phosphoserine is present on serine 124. The Peptidase S3 domain maps to 126–275 (KTFPIMLEGK…KYTPENCEQW (150 aa)). Threonine 127 carries the post-translational modification Phosphothreonine. Catalysis depends on charge relay system residues histidine 152, aspartate 174, and serine 226. A functions as an uncleaved signal peptide for the precursor of protein E3/E2 region spans residues 276-287 (SLVTTMCLLANV). The Extracellular segment spans residues 276-701 (SLVTTMCLLA…HYYHRYPMST (426 aa)). N-linked (GlcNAc...) asparagine; by host glycans are attached at residues asparagine 286, asparagine 546, and asparagine 652. Residues 702–722 (ILGLSICAAIATVSVAASTWL) traverse the membrane as a helical segment. At 723 to 757 (FCRSRVACLTPYRLTPNARIPFCLAVLCCARTARA) the chain is on the cytoplasmic side. 3 S-palmitoyl cysteine; by host lipidation sites follow: cysteine 730, cysteine 750, and cysteine 751. The transient transmembrane before p62-6K protein processing stretch occupies residues 730–750 (CLTPYRLTPNARIPFCLAVLC). The Extracellular portion of the chain corresponds to 758–772 (ETTWESLDHLWNNNQ). A helical transmembrane segment spans residues 773 to 793 (QMFWIQLLIPLAALIVVTRLL). Over 794 to 795 (RC) the chain is Cytoplasmic. A helical membrane pass occupies residues 796-816 (VCCVVPFLVMAGAAAGAYEHA). The Extracellular segment spans residues 817 to 1224 (TTMPSQAGIS…SKTAWTWLTS (408 aa)). Cystine bridges form between cysteine 861–cysteine 926, cysteine 874–cysteine 906, cysteine 875–cysteine 908, and cysteine 880–cysteine 890. Positions 896 to 913 (VYPFMWGGAYCFCDTENT) are E1 fusion peptide loop. Residue asparagine 946 is glycosylated (N-linked (GlcNAc...) asparagine; by host). Cystine bridges form between cysteine 1071/cysteine 1083, cysteine 1113/cysteine 1188, cysteine 1118/cysteine 1192, and cysteine 1140/cysteine 1182. Residues 1225 to 1245 (LLGGSAVIIIIGLVLATIVAM) form a helical membrane-spanning segment. At 1246-1254 (YVLTNQKHN) the chain is on the cytoplasmic side.

As to quaternary structure, homodimer. Homomultimer. Interacts with host karyopherin KPNA4; this interaction allows the nuclear import of the viral capsid protein. Interacts with spike glycoprotein E2. Interacts with host IRAK1; the interaction leads to inhibition of IRAK1-dependent signaling. Part of a tetrameric complex composed of host CRM1, host importin alpha/beta dimer and the viral capsid; this complex blocks the receptor-mediated transport through the nuclear pore. Interacts with host phosphatase PPP1CA; this interaction dephosphorylates the capsid protein, which increases its ability to bind to the viral genome. The precursor of protein E3/E2 and E1 form a heterodimer shortly after synthesis. In terms of assembly, interacts with spike glycoprotein E2. The precursor of protein E3/E2 and E1 form a heterodimer shortly after synthesis. Processing of the precursor of protein E3/E2 into E2 and E3 results in a heterodimer of the spike glycoproteins E2 and E1. Spike at virion surface are constituted of three E2-E1 heterodimers. After target cell attachment and endocytosis, E1 change conformation to form homotrimers. Interacts with 6K protein. Interacts with host LDLRAD3; this interaction mediates viral entry to the host cell. As to quaternary structure, interacts with spike glycoprotein E1. Processing of the precursor of protein E3/E2 into E2 and E3 results in a heterodimer of the spike glycoproteins E2 and E1. Spike at virion surface are constituted of a trimer of E2-E1 heterodimers. Interacts with 6K protein. Interacts with host LDLRAD3; this interaction mediates viral entry to the host cell. Oligomer. Interacts with spike glycoprotein E1. Interacts with spike glycoprotein E2. In terms of processing, structural polyprotein: Specific enzymatic cleavages in vivo yield mature proteins. Capsid protein is auto-cleaved during polyprotein translation, unmasking a signal peptide at the N-terminus of the precursor of E3/E2. The remaining polyprotein is then targeted to the host endoplasmic reticulum, where host signal peptidase cleaves it into pE2, 6K and E1 proteins. pE2 is further processed to mature E3 and E2 by host furin in trans-Golgi vesicle. Post-translationally, palmitoylated via thioester bonds. These palmitoylations may induce disruption of the C-terminus transmembrane. This would result in the reorientation of E2 C-terminus from lumenal to cytoplasmic side. Phosphorylated on serine and threonine residues. In terms of processing, N-glycosylated. Post-translationally, palmitoylated via thioester bonds.

It localises to the virion. The protein resides in the host cytoplasm. The protein localises to the host cell membrane. Its subcellular location is the host nucleus. It is found in the virion membrane. It carries out the reaction Autocatalytic release of the core protein from the N-terminus of the togavirus structural polyprotein by hydrolysis of a -Trp-|-Ser- bond.. In terms of biological role, forms an icosahedral capsid with a T=4 symmetry composed of 240 copies of the capsid protein surrounded by a lipid membrane through which penetrate 80 spikes composed of trimers of E1-E2 heterodimers. The capsid protein binds to the viral RNA genome at a site adjacent to a ribosome binding site for viral genome translation following genome release. Possesses a protease activity that results in its autocatalytic cleavage from the nascent structural protein. Following its self-cleavage, the capsid protein transiently associates with ribosomes, and within several minutes the protein binds to viral RNA and rapidly assembles into icosahedric core particles. The resulting nucleocapsid eventually associates with the cytoplasmic domain of the spike glycoprotein E2 at the cell membrane, leading to budding and formation of mature virions. In case of infection, new virions attach to target cells and after clathrin-mediated endocytosis their membrane fuses with the host endosomal membrane. This leads to the release of the nucleocapsid into the cytoplasm, followed by an uncoating event necessary for the genomic RNA to become accessible. The uncoating might be triggered by the interaction of capsid proteins with ribosomes. Binding of ribosomes would release the genomic RNA since the same region is genomic RNA-binding and ribosome-binding. Specifically inhibits interleukin-1 receptor-associated kinase 1/IRAK1-dependent signaling during viral entry, representing a means by which the alphaviruses may evade innate immune detection and activation prior to viral gene expression. Inhibits host transcription. Forms a tetrameric complex with XPO1/CRM1 and the nuclear import receptor importin. This complex blocks the central channel of host nuclear pores thereby inhibiting the receptor-mediated nuclear transport and thus the host mRNA and rRNA transcription. The inhibition of transcription is linked to a cytopathic effect on the host cell. Its function is as follows. Provides the signal sequence for the translocation of the precursor of protein E3/E2 to the host endoplasmic reticulum. Furin-cleaved E3 remains associated with spike glycoprotein E1 and mediates pH protection of the latter during the transport via the secretory pathway. After virion release from the host cell, the assembly protein E3 is gradually released in the extracellular space. Functionally, plays a role in viral attachment to target host cell, by binding to the cell receptor LDLRAD3. Synthesized as a p62 precursor which is processed by furin at the cell membrane just before virion budding, giving rise to E2-E1 heterodimer. The p62-E1 heterodimer is stable, whereas E2-E1 is unstable and dissociate at low pH. p62 is processed at the last step, presumably to avoid E1 fusion activation before its final export to cell surface. E2 C-terminus contains a transitory transmembrane that would be disrupted by palmitoylation, resulting in reorientation of the C-terminal tail from lumenal to cytoplasmic side. This step is critical since E2 C-terminus is involved in budding by interacting with capsid proteins. This release of E2 C-terminus in cytoplasm occurs lately in protein export, and precludes premature assembly of particles at the endoplasmic reticulum membrane. Acts as a viroporin that participates in virus glycoprotein processing and transport to the plasma membrane, cell permeabilization and budding of viral particles. Disrupts the calcium homeostasis of the cell, probably at the endoplasmic reticulum level. This leads to cytoplasmic calcium elevation. Because of its lipophilic properties, the 6K protein is postulated to influence the selection of lipids that interact with the transmembrane domains of the glycoproteins, which, in turn, affects the deformability of the bilayer required for the extreme curvature that occurs as budding proceeds. Present in low amount in virions, about 3% compared to viral glycoproteins. In terms of biological role, class II viral fusion protein. Fusion activity is inactive as long as E1 is bound to E2 in mature virion. After virus attachment to cell receptor LDLRAD3 and endocytosis, acidification of the endosome would induce dissociation of E1/E2 heterodimer and concomitant trimerization of the E1 subunits. This E1 trimer is fusion active, and promotes release of viral nucleocapsid in cytoplasm after endosome and viral membrane fusion. Efficient fusion requires the presence of cholesterol and sphingolipid in the target membrane. Fusion is optimal at levels of about 1 molecule of cholesterol per 2 molecules of phospholipids, and is specific for sterols containing a 3-beta-hydroxyl group. This chain is Structural polyprotein, found in Bos taurus (Bovine).